The following is a 396-amino-acid chain: Argininosuccinate synthase (396 aa).

6–14 (AYSGGLDTS) is an ATP binding site. L-citrulline is bound at residue Tyr83. Gly113 contributes to the ATP binding site. 3 residues coordinate L-aspartate: Thr115, Asn119, and Asp120. L-citrulline is bound at residue Asn119. L-citrulline contacts are provided by Arg123, Ser171, Ser180, Glu256, and Tyr268.

Belongs to the argininosuccinate synthase family. Type 1 subfamily. As to quaternary structure, homotetramer.

Its subcellular location is the cytoplasm. It carries out the reaction L-citrulline + L-aspartate + ATP = 2-(N(omega)-L-arginino)succinate + AMP + diphosphate + H(+). It functions in the pathway amino-acid biosynthesis; L-arginine biosynthesis; L-arginine from L-ornithine and carbamoyl phosphate: step 2/3. This chain is Argininosuccinate synthase, found in Hyperthermus butylicus (strain DSM 5456 / JCM 9403 / PLM1-5).